A 72-amino-acid polypeptide reads, in one-letter code: UPF0150 protein ssl0738 (72 aa).

This sequence belongs to the UPF0150 family.

This chain is UPF0150 protein ssl0738, found in Synechocystis sp. (strain ATCC 27184 / PCC 6803 / Kazusa).